Here is a 363-residue protein sequence, read N- to C-terminus: Teichoic acids export ATP-binding protein TagH (363 aa).

Positions 27-246 constitute an ABC transporter domain; that stretch reads KHFFNIGNVD…YRKFSKDFKA (220 aa). Position 60-67 (60-67) interacts with ATP; it reads GINGSGKS. The tract at residues 247 to 363 is unknown; that stretch reads QTAAYRKKYQ…KSQSVLFNSK (117 aa).

The protein belongs to the ABC transporter superfamily. Teichoic acids exporter (TC 3.A.1.104.1) family. In terms of assembly, the complex is composed of two ATP-binding proteins (TagH) and two transmembrane proteins (TagG).

It is found in the cell membrane. It catalyses the reaction ATP + H2O + teichoic acidSide 1 = ADP + phosphate + teichoic acidSide 2.. Functionally, part of the ABC transporter complex TagGH involved in teichoic acids export. Responsible for energy coupling to the transport system. The sequence is that of Teichoic acids export ATP-binding protein TagH from Lactiplantibacillus plantarum (strain ATCC BAA-793 / NCIMB 8826 / WCFS1) (Lactobacillus plantarum).